A 434-amino-acid polypeptide reads, in one-letter code: Ribosomal protein uS12 methylthiotransferase RimO (434 aa).

Residues 1 to 107 form the MTTase N-terminal domain; it reads MHLGCEKNLV…ILNVLQRIEQ (107 aa). [4Fe-4S] cluster contacts are provided by C5, C41, C70, C145, C149, and C152. A Radical SAM core domain is found at 131 to 360; it reads TTGKAVAYLK…ISIQQPIAEL (230 aa). Residues 363–434 form the TRAM domain; it reads QNWIGRTVDV…DLYDLTGQVV (72 aa).

This sequence belongs to the methylthiotransferase family. RimO subfamily. [4Fe-4S] cluster serves as cofactor.

It is found in the cytoplasm. The enzyme catalyses L-aspartate(89)-[ribosomal protein uS12]-hydrogen + (sulfur carrier)-SH + AH2 + 2 S-adenosyl-L-methionine = 3-methylsulfanyl-L-aspartate(89)-[ribosomal protein uS12]-hydrogen + (sulfur carrier)-H + 5'-deoxyadenosine + L-methionine + A + S-adenosyl-L-homocysteine + 2 H(+). Its function is as follows. Catalyzes the methylthiolation of an aspartic acid residue of ribosomal protein uS12. The protein is Ribosomal protein uS12 methylthiotransferase RimO of Prochlorococcus marinus (strain SARG / CCMP1375 / SS120).